We begin with the raw amino-acid sequence, 151 residues long: Ribosome maturation factor RimP (151 aa).

It belongs to the RimP family.

The protein localises to the cytoplasm. In terms of biological role, required for maturation of 30S ribosomal subunits. This is Ribosome maturation factor RimP from Crocosphaera subtropica (strain ATCC 51142 / BH68) (Cyanothece sp. (strain ATCC 51142)).